Consider the following 283-residue polypeptide: 3-methyl-2-oxobutanoate hydroxymethyltransferase (283 aa).

Mg(2+) contacts are provided by D44 and D83. Residues 44 to 45 (DS), D83, and K112 contribute to the 3-methyl-2-oxobutanoate site. E114 serves as a coordination point for Mg(2+). Catalysis depends on E181, which acts as the Proton acceptor.

Belongs to the PanB family. As to quaternary structure, homodecamer; pentamer of dimers. Mg(2+) is required as a cofactor.

It localises to the cytoplasm. It catalyses the reaction 3-methyl-2-oxobutanoate + (6R)-5,10-methylene-5,6,7,8-tetrahydrofolate + H2O = 2-dehydropantoate + (6S)-5,6,7,8-tetrahydrofolate. It participates in cofactor biosynthesis; coenzyme A biosynthesis. Its function is as follows. Catalyzes the reversible reaction in which hydroxymethyl group from 5,10-methylenetetrahydrofolate is transferred onto alpha-ketoisovalerate to form ketopantoate. This chain is 3-methyl-2-oxobutanoate hydroxymethyltransferase, found in Pyrococcus furiosus (strain ATCC 43587 / DSM 3638 / JCM 8422 / Vc1).